The following is a 339-amino-acid chain: Anthranilate phosphoribosyltransferase (339 aa).

Residues G81, 84–85, T89, 91–94, 109–117, and S121 each bind 5-phospho-alpha-D-ribose 1-diphosphate; these read GD, NIST, and KHGNRSVSS. G81 contributes to the anthranilate binding site. S93 is a Mg(2+) binding site. N112 contacts anthranilate. R165 contacts anthranilate. Mg(2+)-binding residues include D224 and E225.

This sequence belongs to the anthranilate phosphoribosyltransferase family. Homodimer. The cofactor is Mg(2+).

It carries out the reaction N-(5-phospho-beta-D-ribosyl)anthranilate + diphosphate = 5-phospho-alpha-D-ribose 1-diphosphate + anthranilate. The protein operates within amino-acid biosynthesis; L-tryptophan biosynthesis; L-tryptophan from chorismate: step 2/5. Catalyzes the transfer of the phosphoribosyl group of 5-phosphorylribose-1-pyrophosphate (PRPP) to anthranilate to yield N-(5'-phosphoribosyl)-anthranilate (PRA). The sequence is that of Anthranilate phosphoribosyltransferase from Thermosynechococcus vestitus (strain NIES-2133 / IAM M-273 / BP-1).